The sequence spans 875 residues: Metal transporter CNNM2 (875 aa).

Residues 1–250 (MIGCGACEPE…TKMIVGEEKK (250 aa)) are Extracellular-facing. Asn-112 carries an N-linked (GlcNAc...) asparagine glycan. The segment at 122-148 (EHERRRHTPGERGLGGPAPPEPDSGPQ) is disordered. The helical transmembrane segment at 251 to 271 (FLLPFWLQVIFISLLLCLSGM) threads the bilayer. One can recognise a CNNM transmembrane domain in the interval 251–431 (FLLPFWLQVI…DPYNDLVKEE (181 aa)). The Cytoplasmic segment spans residues 272–313 (FSGLNLGLMALDPMELRIVQNCGTEKEKNYAKRIEPVRRQGN). The helical intramembrane region spans 314-334 (YLLCSLLLGNVLVNTTLTILL). The Cytoplasmic segment spans residues 335–338 (DDIA). The helical transmembrane segment at 339–359 (GSGLVAVVVSTIGIVIFGEIV) threads the bilayer. Over 360-368 (PQAICSRHG) the chain is Extracellular. Residues 369–389 (LAVGANTIFLTKFFMMMTFPA) form a helical membrane-spanning segment. At 390–875 (SYPVSKLLDC…NHSLHSEGAI (486 aa)) the chain is on the cytoplasmic side. 2 consecutive CBS domains span residues 450-511 (MTPL…CTPL) and 518-584 (YNHP…ILDE). The disordered stretch occupies residues 741 to 763 (AGSPGENKSPPRPCGLNHSDSLS). A Phosphoserine modification is found at Ser-761.

The protein belongs to the ACDP family.

The protein resides in the cell membrane. Functionally, divalent metal cation transporter. Mediates transport of divalent metal cations in an order of Mg(2+) &gt; Co(2+) &gt; Mn(2+) &gt; Sr(2+) &gt; Ba(2+) &gt; Cu(2+) &gt; Fe(2+). This chain is Metal transporter CNNM2 (Cnnm2), found in Rattus norvegicus (Rat).